Here is a 242-residue protein sequence, read N- to C-terminus: ATP synthase subunit a (242 aa).

A run of 5 helical transmembrane segments spans residues 21 to 41 (LASV…AIVC), 83 to 103 (AVTL…FAIV), 118 to 137 (ATVT…YYGI), 175 to 195 (LYGN…LFFE), and 198 to 218 (AWGW…SIFV).

It belongs to the ATPase A chain family. In terms of assembly, F-type ATPases have 2 components, CF(1) - the catalytic core - and CF(0) - the membrane proton channel. CF(1) has five subunits: alpha(3), beta(3), gamma(1), delta(1), epsilon(1). CF(0) has three main subunits: a(1), b(2) and c(9-12). The alpha and beta chains form an alternating ring which encloses part of the gamma chain. CF(1) is attached to CF(0) by a central stalk formed by the gamma and epsilon chains, while a peripheral stalk is formed by the delta and b chains.

It localises to the cell membrane. Its function is as follows. Key component of the proton channel; it plays a direct role in the translocation of protons across the membrane. This chain is ATP synthase subunit a, found in Staphylococcus epidermidis (strain ATCC 35984 / DSM 28319 / BCRC 17069 / CCUG 31568 / BM 3577 / RP62A).